The following is a 445-amino-acid chain: D-serine dehydratase (445 aa).

Lysine 118 carries the N6-(pyridoxal phosphate)lysine modification.

Belongs to the serine/threonine dehydratase family. DsdA subfamily. As to quaternary structure, monomer. Pyridoxal 5'-phosphate serves as cofactor.

It carries out the reaction D-serine = pyruvate + NH4(+). The chain is D-serine dehydratase from Serratia proteamaculans (strain 568).